Here is a 205-residue protein sequence, read N- to C-terminus: Transcription antitermination protein NusB (205 aa).

Belongs to the NusB family.

In terms of biological role, involved in transcription antitermination. Required for transcription of ribosomal RNA (rRNA) genes. Binds specifically to the boxA antiterminator sequence of the ribosomal RNA (rrn) operons. This is Transcription antitermination protein NusB from Acaryochloris marina (strain MBIC 11017).